A 255-amino-acid polypeptide reads, in one-letter code: Tryptophan synthase alpha chain (255 aa).

Residues glutamate 44 and aspartate 55 each act as proton acceptor in the active site.

It belongs to the TrpA family. In terms of assembly, tetramer of two alpha and two beta chains.

The catalysed reaction is (1S,2R)-1-C-(indol-3-yl)glycerol 3-phosphate + L-serine = D-glyceraldehyde 3-phosphate + L-tryptophan + H2O. The protein operates within amino-acid biosynthesis; L-tryptophan biosynthesis; L-tryptophan from chorismate: step 5/5. Functionally, the alpha subunit is responsible for the aldol cleavage of indoleglycerol phosphate to indole and glyceraldehyde 3-phosphate. The sequence is that of Tryptophan synthase alpha chain from Dehalococcoides mccartyi (strain ATCC BAA-2100 / JCM 16839 / KCTC 5957 / BAV1).